A 389-amino-acid chain; its full sequence is 23S rRNA (uracil(747)-C(5))-methyltransferase RlmC (389 aa).

[4Fe-4S] cluster is bound by residues Cys12, Cys20, Cys23, and Cys99. Residues Gln224, Phe253, Glu274, and Asn321 each contribute to the S-adenosyl-L-methionine site. The Nucleophile role is filled by Cys348.

It belongs to the class I-like SAM-binding methyltransferase superfamily. RNA M5U methyltransferase family. RlmC subfamily.

The catalysed reaction is uridine(747) in 23S rRNA + S-adenosyl-L-methionine = 5-methyluridine(747) in 23S rRNA + S-adenosyl-L-homocysteine + H(+). Its function is as follows. Catalyzes the formation of 5-methyl-uridine at position 747 (m5U747) in 23S rRNA. The polypeptide is 23S rRNA (uracil(747)-C(5))-methyltransferase RlmC (Shewanella putrefaciens (strain CN-32 / ATCC BAA-453)).